The primary structure comprises 113 residues: Large ribosomal subunit protein uL22 (113 aa).

It belongs to the universal ribosomal protein uL22 family. In terms of assembly, part of the 50S ribosomal subunit.

Its function is as follows. This protein binds specifically to 23S rRNA; its binding is stimulated by other ribosomal proteins, e.g. L4, L17, and L20. It is important during the early stages of 50S assembly. It makes multiple contacts with different domains of the 23S rRNA in the assembled 50S subunit and ribosome. Functionally, the globular domain of the protein is located near the polypeptide exit tunnel on the outside of the subunit, while an extended beta-hairpin is found that lines the wall of the exit tunnel in the center of the 70S ribosome. The chain is Large ribosomal subunit protein uL22 from Pelotomaculum thermopropionicum (strain DSM 13744 / JCM 10971 / SI).